The sequence spans 447 residues: Glyceraldehyde-3-phosphate dehydrogenase GAPB, chloroplastic (447 aa).

Residues 1 to 80 (MATHAALAVS…STPVRGETVA (80 aa)) constitute a chloroplast transit peptide. NADP(+)-binding positions include 91–92 (RI), aspartate 115, and arginine 160. Residues 234 to 236 (SCT), threonine 265, arginine 280, 293 to 294 (TG), and arginine 316 each bind D-glyceraldehyde 3-phosphate. The active-site Nucleophile is the cysteine 235. Asparagine 399 serves as a coordination point for NADP(+).

This sequence belongs to the glyceraldehyde-3-phosphate dehydrogenase family. Tetramer of either four A chains (GAPDH 2) or two A and two B chains (GAPDH 1). As to expression, expressed in leaves and stems.

It is found in the plastid. The protein localises to the chloroplast membrane. Its subcellular location is the chloroplast stroma. It catalyses the reaction D-glyceraldehyde 3-phosphate + phosphate + NADP(+) = (2R)-3-phospho-glyceroyl phosphate + NADPH + H(+). The protein operates within carbohydrate biosynthesis; Calvin cycle. In terms of biological role, involved in the photosynthetic reductive pentose phosphate pathway (Calvin-Benson cycle). Catalyzes the reduction of 1,3-diphosphoglycerate by NADPH. The protein is Glyceraldehyde-3-phosphate dehydrogenase GAPB, chloroplastic (GAPB) of Arabidopsis thaliana (Mouse-ear cress).